Here is a 184-residue protein sequence, read N- to C-terminus: NADH-dependent flavin reductase subunit 2 (184 aa).

This sequence belongs to the NADH-dependent flavin reductase family. In terms of assembly, requires LJ_0548 for activity, but the exact composition of the enzyme is unclear.

It carries out the reaction a reduced flavin + NAD(+) = an oxidized flavin + NADH + 2 H(+). Functionally, component of an enzyme that catalyzes the reduction of free flavins (FMN, FAD and riboflavin) by NADH; the reduced flavins produced by this reaction likely spontaneously react with oxygen, yielding hydrogen peroxide. Is responsible for the major H(2)O(2) production in L.johnsonii in the presence of oxygen. Cannot use NADPH instead of NADH as the electron donor. This chain is NADH-dependent flavin reductase subunit 2 (nfr2), found in Lactobacillus johnsonii (strain CNCM I-12250 / La1 / NCC 533).